The primary structure comprises 756 residues: Xylosyl- and glucuronyltransferase LARGE1 (756 aa).

The Cytoplasmic segment spans residues 1-10; the sequence is MLGICRGRRK. Residues 11-31 traverse the membrane as a helical; Signal-anchor for type II membrane protein segment; it reads FLAASLSLLCIPAITWIYLFS. At 32–756 the chain is on the lumenal side; the sequence is GSFEDGKPVS…LKYLTAENNS (725 aa). Disordered regions lie at residues 43–69 and 81–109; these read SPLE…EVRM and RQLS…EGTG. A compositionally biased stretch (polar residues) spans 44–58; it reads PLESQAHSPRYTASS. Positions 53 to 95 form a coiled coil; it reads RYTASSQRERESLEVRMREVEEENRALRRQLSLAQGRAPSHRR. Residues 59–69 show a composition bias toward basic and acidic residues; the sequence is QRERESLEVRM. Asn97, Asn122, and Asn148 each carry an N-linked (GlcNAc...) asparagine glycan. Positions 138-413 are xylosyltransferase activity; sequence IHVAIVCAGY…FLEYDGNLLR (276 aa). Mn(2+)-binding residues include Asp242 and Asp244. An N-linked (GlcNAc...) asparagine glycan is attached at Asn272. The segment at 414–756 is glucuronyltransferase activity; the sequence is RELFGCPSEA…LKYLTAENNS (343 aa). Mn(2+) contacts are provided by Asp563 and Asp565.

The protein in the C-terminal section; belongs to the glycosyltransferase 49 family. It in the N-terminal section; belongs to the glycosyltransferase 8 family. As to quaternary structure, interacts with DAG1 (via the N-terminal domain of alpha-DAG1); the interaction increases binding of DAG1 to laminin. Interacts with B4GAT1. It depends on Mn(2+) as a cofactor. Ubiquitous. Highest expression in heart, brain and skeletal muscle.

The protein localises to the golgi apparatus membrane. It catalyses the reaction 3-O-[beta-D-GlcA-(1-&gt;3)-beta-D-Xyl-(1-&gt;4)-Rib-ol-P-Rib-ol-P-3-beta-D-GalNAc-(1-&gt;3)-beta-D-GlcNAc-(1-&gt;4)-(O-6-P-alpha-D-Man)]-Thr-[protein] + UDP-alpha-D-xylose = 3-O-[alpha-D-Xyl-(1-&gt;3)-beta-D-GlcA-(1-&gt;4)-beta-D-Xyl-(1-&gt;4)-Rib-ol-P-Rib-ol-P-3-beta-D-GalNAc-(1-&gt;3)-beta-D-GlcNAc-(1-&gt;4)-(O-6-P-alpha-D-Man)]-Thr-[protein] + UDP + H(+). It carries out the reaction 3-O-{(1-&gt;[3)-alpha-D-Xyl-(1-&gt;3)-beta-D-GlcA-(1-&gt;](n)-4)-beta-D-Xyl-(1-&gt;4)-Rib-ol-P-Rib-ol-P-3-beta-D-GalNAc-(1-&gt;3)-beta-D-GlcNAc-(1-&gt;4)-O-6-P-alpha-D-Man}-L-Thr-[protein] + UDP-alpha-D-glucuronate = 3-O-{beta-D-GlcA-(1-&gt;[3)-alpha-D-Xyl-(1-&gt;3)-beta-D-GlcA-(1-&gt;](n)-4)-beta-D-Xyl-(1-&gt;4)-Rib-ol-P-Rib-ol-P-3-beta-D-GalNAc-(1-&gt;3)-beta-D-GlcNAc-(1-&gt;4)-O-6-P-alpha-D-Man}-L-Thr-[protein] + UDP + H(+). The enzyme catalyses 3-O-{beta-D-GlcA-(1-&gt;[3)-alpha-D-Xyl-(1-&gt;3)-beta-D-GlcA-(1-&gt;](n)-4)-beta-D-Xyl-(1-&gt;4)-Rib-ol-P-Rib-ol-P-3-beta-D-GalNAc-(1-&gt;3)-beta-D-GlcNAc-(1-&gt;4)-O-6-P-alpha-D-Man}-L-Thr-[protein] + UDP-alpha-D-xylose = 3-O-{(1-&gt;[3)-alpha-D-Xyl-(1-&gt;3)-beta-D-GlcA-(1-&gt;](n+1)-4)-beta-D-Xyl-(1-&gt;4)-Rib-ol-P-Rib-ol-P-3-beta-D-GalNAc-(1-&gt;3)-beta-D-GlcNAc-(1-&gt;4)-O-6-P-alpha-D-Man}-L-Thr-[protein] + UDP + H(+). It functions in the pathway protein modification; protein glycosylation. Bifunctional glycosyltransferase with both alpha-1,3-xylosyltransferase and beta-1,3-glucuronyltransferase activities involved in the maturation of alpha-dystroglycan (DAG1) by glycosylation leading to DAG1 binding to laminin G-like domain-containing extracellular proteins with high affinity. Elongates the glucuronyl-beta-1,4-xylose-beta disaccharide primer structure initiated by B4GAT1 by adding repeating units [-3-Xylose-alpha-1,3-GlcA-beta-1-] to produce a heteropolysaccharide. Requires the phosphorylation of core M3 (O-mannosyl trisaccharide) by POMK to elongate the glucuronyl-beta-1,4-xylose-beta disaccharide primer. Plays a key role in skeletal muscle function and regeneration. This is Xylosyl- and glucuronyltransferase LARGE1 from Homo sapiens (Human).